The chain runs to 500 residues: Probable cytosol aminopeptidase (500 aa).

Positions 262 and 267 each coordinate Mn(2+). Residue Lys274 is part of the active site. Positions 285, 344, and 346 each coordinate Mn(2+). Arg348 is a catalytic residue.

The protein belongs to the peptidase M17 family. Requires Mn(2+) as cofactor.

The protein resides in the cytoplasm. It catalyses the reaction Release of an N-terminal amino acid, Xaa-|-Yaa-, in which Xaa is preferably Leu, but may be other amino acids including Pro although not Arg or Lys, and Yaa may be Pro. Amino acid amides and methyl esters are also readily hydrolyzed, but rates on arylamides are exceedingly low.. The catalysed reaction is Release of an N-terminal amino acid, preferentially leucine, but not glutamic or aspartic acids.. Functionally, presumably involved in the processing and regular turnover of intracellular proteins. Catalyzes the removal of unsubstituted N-terminal amino acids from various peptides. This is Probable cytosol aminopeptidase from Ehrlichia ruminantium (strain Gardel).